A 450-amino-acid polypeptide reads, in one-letter code: tRNA modification GTPase MnmE (450 aa).

(6S)-5-formyl-5,6,7,8-tetrahydrofolate is bound by residues arginine 25, glutamate 83, and lysine 122. The TrmE-type G domain maps to 218–377 (GFKVAIIGKP…QMEALLDSIG (160 aa)). Asparagine 228 provides a ligand contact to K(+). GTP-binding positions include 228 to 233 (NVGKSS), 247 to 253 (SDIAGTT), and 272 to 275 (DTAG). Residue serine 232 participates in Mg(2+) binding. Residues serine 247, isoleucine 249, and threonine 252 each coordinate K(+). Position 253 (threonine 253) interacts with Mg(2+). Lysine 450 is a (6S)-5-formyl-5,6,7,8-tetrahydrofolate binding site.

It belongs to the TRAFAC class TrmE-Era-EngA-EngB-Septin-like GTPase superfamily. TrmE GTPase family. In terms of assembly, homodimer. Heterotetramer of two MnmE and two MnmG subunits. It depends on K(+) as a cofactor.

It localises to the cytoplasm. Exhibits a very high intrinsic GTPase hydrolysis rate. Involved in the addition of a carboxymethylaminomethyl (cmnm) group at the wobble position (U34) of certain tRNAs, forming tRNA-cmnm(5)s(2)U34. The protein is tRNA modification GTPase MnmE of Sulfurovum sp. (strain NBC37-1).